We begin with the raw amino-acid sequence, 219 residues long: Phosphatidylserine decarboxylase proenzyme (219 aa).

S188 acts as the Schiff-base intermediate with substrate; via pyruvic acid in catalysis. A Pyruvic acid (Ser); by autocatalysis modification is found at S188.

The protein belongs to the phosphatidylserine decarboxylase family. PSD-A subfamily. Heterodimer of a large membrane-associated beta subunit and a small pyruvoyl-containing alpha subunit. The cofactor is pyruvate. Is synthesized initially as an inactive proenzyme. Formation of the active enzyme involves a self-maturation process in which the active site pyruvoyl group is generated from an internal serine residue via an autocatalytic post-translational modification. Two non-identical subunits are generated from the proenzyme in this reaction, and the pyruvate is formed at the N-terminus of the alpha chain, which is derived from the carboxyl end of the proenzyme. The post-translation cleavage follows an unusual pathway, termed non-hydrolytic serinolysis, in which the side chain hydroxyl group of the serine supplies its oxygen atom to form the C-terminus of the beta chain, while the remainder of the serine residue undergoes an oxidative deamination to produce ammonia and the pyruvoyl prosthetic group on the alpha chain.

The protein resides in the cell membrane. It catalyses the reaction a 1,2-diacyl-sn-glycero-3-phospho-L-serine + H(+) = a 1,2-diacyl-sn-glycero-3-phosphoethanolamine + CO2. The protein operates within phospholipid metabolism; phosphatidylethanolamine biosynthesis; phosphatidylethanolamine from CDP-diacylglycerol: step 2/2. In terms of biological role, catalyzes the formation of phosphatidylethanolamine (PtdEtn) from phosphatidylserine (PtdSer). This Geobacter sp. (strain M21) protein is Phosphatidylserine decarboxylase proenzyme.